The primary structure comprises 313 residues: GDP-D-glycero-alpha-D-manno-heptose dehydrogenase (313 aa).

NADH is bound by residues 13-14, 33-39, Phe37, 57-58, Leu77, and 144-148; these read YI, DNLMFDQ, DA, and YGIDK. A GDP-binding site is contributed by Thr168. Residues Val169 and 175–177 contribute to the NADH site; that span reads RMR. Residues 179–184, 196–198, Arg204, Lys242, and Arg270 each bind GDP; these read DLLVND and VLF. Asn311 is a binding site for NADH.

In terms of assembly, homotetramer. NAD(+) is required as a cofactor.

It catalyses the reaction GDP-D-glycero-alpha-D-manno-heptose + 2-oxoglutarate = GDP-D-glycero-4-keto-alpha-D-lyxo-heptose + (S)-2-hydroxyglutarate. Its pathway is capsule biogenesis; capsule polysaccharide biosynthesis. Functionally, NAD-dependent dehydrogenase involved in the biosynthesis of heptose moieties with a hydroxyl group at C6 found on the capsular polysaccharide (CPS) of C.jejuni. Catalyzes the initial oxidation of C4 of the GDP-D-glycero-alpha-D-manno-heptose to form GDP-D-glycero-4-keto-alpha-D-lyxo-heptose in the presence of alpha-ketoglutarate required to recycle the NADH nucleotide. This chain is GDP-D-glycero-alpha-D-manno-heptose dehydrogenase, found in Campylobacter jejuni subsp. jejuni serotype O:2 (strain ATCC 700819 / NCTC 11168).